Consider the following 379-residue polypeptide: Spermidine/putrescine import ATP-binding protein PotA (379 aa).

An ABC transporter domain is found at Val10–Ile240. Gly42–Thr49 is a binding site for ATP.

Belongs to the ABC transporter superfamily. Spermidine/putrescine importer (TC 3.A.1.11.1) family. As to quaternary structure, the complex is composed of two ATP-binding proteins (PotA), two transmembrane proteins (PotB and PotC) and a solute-binding protein (PotD).

It is found in the cell inner membrane. It catalyses the reaction ATP + H2O + polyamine-[polyamine-binding protein]Side 1 = ADP + phosphate + polyamineSide 2 + [polyamine-binding protein]Side 1.. Part of the ABC transporter complex PotABCD involved in spermidine/putrescine import. Responsible for energy coupling to the transport system. The chain is Spermidine/putrescine import ATP-binding protein PotA from Treponema pallidum (strain Nichols).